We begin with the raw amino-acid sequence, 425 residues long: Enolase (425 aa).

Q163 lines the (2R)-2-phosphoglycerate pocket. Residue E205 is the Proton donor of the active site. Positions 242, 285, and 312 each coordinate Mg(2+). 4 residues coordinate (2R)-2-phosphoglycerate: K337, R366, S367, and K388. The active-site Proton acceptor is the K337.

This sequence belongs to the enolase family. Mg(2+) serves as cofactor.

It is found in the cytoplasm. Its subcellular location is the secreted. The protein localises to the cell surface. It catalyses the reaction (2R)-2-phosphoglycerate = phosphoenolpyruvate + H2O. Its pathway is carbohydrate degradation; glycolysis; pyruvate from D-glyceraldehyde 3-phosphate: step 4/5. Its function is as follows. Catalyzes the reversible conversion of 2-phosphoglycerate (2-PG) into phosphoenolpyruvate (PEP). It is essential for the degradation of carbohydrates via glycolysis. The sequence is that of Enolase from Acidiphilium cryptum (strain JF-5).